Here is an 836-residue protein sequence, read N- to C-terminus: Probable RING finger protein 207 homolog (836 aa).

The RING-type zinc-finger motif lies at 8 to 42 (CTICKNDFEEPILFSCQHTTCRKCSNGSPSCKTCS). The B box-type 1; atypical zinc-finger motif lies at 68–115 (EEMEQCANCEQITLPMFYCETCQQSLCLACRNVTHQARMFSSHKIISS). Residues C73, C76, C97, and H102 each contribute to the Zn(2+) site. The B box-type 2; degenerate zinc finger occupies 122–164 (YSSSLCKDHNEPYILYCSDVRKLVCIQCFNGRPLEERHSFISI). Residues 527–557 (QNRIMAIEKEEENRRLNQEAKKKEELAGQSA) adopt a coiled-coil conformation. The span at 540–552 (RRLNQEAKKKEEL) shows a compositional bias: basic and acidic residues. Residues 540-571 (RRLNQEAKKKEELAGQSAAMKSLKHGKTKRKE) are disordered. Basic residues predominate over residues 561–571 (SLKHGKTKRKE).

The protein is Probable RING finger protein 207 homolog of Caenorhabditis briggsae.